Reading from the N-terminus, the 827-residue chain is Stage II sporulation protein E (827 aa).

10 consecutive transmembrane segments (helical) span residues 49-69 (IGFL…ALPF), 71-91 (GAML…VLAG), 116-136 (VAAF…FFSM), 142-162 (GFVY…AIVE), 175-195 (QSLP…EEII), 206-226 (TGLA…ARYV), 247-267 (GLIL…LAFS), 269-289 (LLGG…LIVG), 299-319 (GSAG…LFLL), and 320-340 (TPQS…EHLQ). At 341–827 (EQQQYARKIR…AIFQNKQEIS (487 aa)) the chain is on the cytoplasmic side. One can recognise a PPM-type phosphatase domain in the interval 594 to 804 (STGAAHAAKG…DDMTVVVVRI (211 aa)).

It depends on Mn(2+) as a cofactor.

The protein localises to the cell membrane. It carries out the reaction O-phospho-L-seryl-[protein] + H2O = L-seryl-[protein] + phosphate. It catalyses the reaction O-phospho-L-threonyl-[protein] + H2O = L-threonyl-[protein] + phosphate. Normally needed for pro-sigma E processing during sporulation but can be bypassed in vegetative cells. Activates SpoIIAA by dephosphorylation. In Bacillus subtilis (strain 168), this protein is Stage II sporulation protein E (spoIIE).